The primary structure comprises 170 residues: Probable deoxyuridine 5'-triphosphate nucleotidohydrolase (170 aa).

It belongs to the dCTP deaminase family. Archaeal dUTPase subfamily.

It carries out the reaction dUTP + H2O = dUMP + diphosphate + H(+). It participates in pyrimidine metabolism; dUMP biosynthesis; dUMP from dCTP (dUTP route): step 2/2. Functionally, this enzyme is involved in nucleotide metabolism: it produces dUMP, the immediate precursor of thymidine nucleotides and it decreases the intracellular concentration of dUTP so that uracil cannot be incorporated into DNA. This is Probable deoxyuridine 5'-triphosphate nucleotidohydrolase from Methanococcoides burtonii (strain DSM 6242 / NBRC 107633 / OCM 468 / ACE-M).